A 174-amino-acid chain; its full sequence is Scytalone dehydratase-like protein Arp1 (174 aa).

A substrate-binding site is contributed by tyrosine 49. Residues histidine 84 and histidine 109 contribute to the active site. Asparagine 130 provides a ligand contact to substrate.

The protein belongs to the scytalone dehydratase family. In terms of assembly, homotrimer. Each subunit contains an active site, located in the central part of the hydrophobic core of the monomer, which functions independently.

In terms of biological role, scytalone dehydratase-like protein; part of the Pks2 gene cluster that mediates the formation of infectious structures (appressoria), enabling these fungi to kill insects faster. The product of the Pks2 gene cluster is different from the one of Pks1 and has still not been identified. This is Scytalone dehydratase-like protein Arp1 from Metarhizium majus (strain ARSEF 297).